The sequence spans 489 residues: MTAELLVNVTPSETRVAYIDGGILQEIHIEREARRGIVGNIYKGRVSRVLPGMQAAFVDIGLDKAAFLHASDIMPHTECVAGEEQKQFTVRDISELVRQGQDLMVQVVKDPLGTKGARLTTDITLPSRYLVFMPGASHVGVSQRIESESERERLKKVVAEYCDEQGGFIIRTAAEGVGEAELASDAAYLKRVWTKVMERKKRPQTRYQLYGELALAQRVLRDFADAELDRIRVDSRLTYEALLEFTSEYIPEMTSKLEHYTGRQPIFDLFDVENEIQRALERKVELKSGGYLIIDQTEAMTTVDINTGAFVGHRNLDDTIFNTNIEATQAIARQLRLRNLGGIIIIDFIDMNNEDHRRRVLHSLEQALSKDRVKTSVNGFSALGLVEMTRKRTRESIEHVLCNECPTCHGRGTVKTVETVCYEIMREIVRVHHAYDSDRFLVYASPAVAEALKGEESHSLAEVEIFVGKQVKVQIEPLYNQEQFDVVMM.

In terms of domain architecture, S1 motif spans 39 to 128 (GNIYKGRVSR…LTTDITLPSR (90 aa)). Mg(2+)-binding residues include Asp-304 and Asp-347.

It belongs to the RNase E/G family. RNase G subfamily. In terms of assembly, homodimer, in equilibrium with possible higher multimers. Requires Mg(2+) as cofactor.

It localises to the cytoplasm. Functionally, an endonuclease that acts in the processing of the 5'-end of 16S rRNA and 23S rRNA. It prefers 5'-monophosphorylated substrates and cleaves single-stranded sites rich in A and U residues; contributes to tRNA processing and mRNA turnover. This Escherichia coli O157:H7 protein is Ribonuclease G (rng).